A 334-amino-acid polypeptide reads, in one-letter code: Glyceraldehyde-3-phosphate dehydrogenase 1 (334 aa).

NAD(+) contacts are provided by residues 11–12 (RI), Asp33, Arg77, and Ser119. Residues 150–152 (SCT) and Thr181 contribute to the D-glyceraldehyde 3-phosphate site. Cys151 serves as the catalytic Nucleophile. Residue Asn182 participates in NAD(+) binding. D-glyceraldehyde 3-phosphate is bound by residues Arg196, 209–210 (TG), and Arg232. Asn314 contributes to the NAD(+) binding site.

The protein belongs to the glyceraldehyde-3-phosphate dehydrogenase family. As to quaternary structure, homotetramer.

The protein localises to the cytoplasm. It carries out the reaction D-glyceraldehyde 3-phosphate + phosphate + NAD(+) = (2R)-3-phospho-glyceroyl phosphate + NADH + H(+). It participates in carbohydrate degradation; glycolysis; pyruvate from D-glyceraldehyde 3-phosphate: step 1/5. In terms of biological role, catalyzes the oxidative phosphorylation of glyceraldehyde 3-phosphate (G3P) to 1,3-bisphosphoglycerate (BPG) using the cofactor NAD. The first reaction step involves the formation of a hemiacetal intermediate between G3P and a cysteine residue, and this hemiacetal intermediate is then oxidized to a thioester, with concomitant reduction of NAD to NADH. The reduced NADH is then exchanged with the second NAD, and the thioester is attacked by a nucleophilic inorganic phosphate to produce BPG. This Bacillus cereus protein is Glyceraldehyde-3-phosphate dehydrogenase 1 (gap1).